We begin with the raw amino-acid sequence, 262 residues long: uncharacterized protein (262 aa).

6 residues coordinate a divalent metal cation: H7, H9, E98, H138, H162, and D212.

Belongs to the metallo-dependent hydrolases superfamily. TatD-type hydrolase family. A divalent metal cation serves as cofactor.

This is an uncharacterized protein from Haemophilus influenzae (strain ATCC 51907 / DSM 11121 / KW20 / Rd).